Reading from the N-terminus, the 707-residue chain is Polyribonucleotide nucleotidyltransferase (707 aa).

2 residues coordinate Mg(2+): Asp491 and Asp497. The 60-residue stretch at 558–617 folds into the KH domain; the sequence is PRIEKIKIHPDKIGLLIGPGGKTIKKISAESGAEITIEDDGTVMIYSSSADSLEAAREMI. The S1 motif domain occupies 622–695; that stretch reads GEVTVGGIYR…EKGRYKFSRK (74 aa).

The protein belongs to the polyribonucleotide nucleotidyltransferase family. The cofactor is Mg(2+).

Its subcellular location is the cytoplasm. The catalysed reaction is RNA(n+1) + phosphate = RNA(n) + a ribonucleoside 5'-diphosphate. Its function is as follows. Involved in mRNA degradation. Catalyzes the phosphorolysis of single-stranded polyribonucleotides processively in the 3'- to 5'-direction. The polypeptide is Polyribonucleotide nucleotidyltransferase (Methylacidiphilum infernorum (isolate V4) (Methylokorus infernorum (strain V4))).